The chain runs to 278 residues: Delta(3,5)-Delta(2,4)-dienoyl-CoA isomerase, peroxisomal (278 aa).

Met-1 carries the N-acetylmethionine modification. Substrate is bound by residues 69-73 and Gly-128; that span reads SGIDL. The Microbody targeting signal signature appears at 276 to 278; the sequence is AKL.

It belongs to the enoyl-CoA hydratase/isomerase family. Expressed in roots, leaves, stems and flowers.

The protein resides in the peroxisome. The catalysed reaction is a (3E,5Z)-dienoyl-CoA = a (2E,4E)-(5,6-saturated)-dienoyl-CoA. It functions in the pathway lipid metabolism; fatty acid beta-oxidation. Its function is as follows. Converts 3,5-dienoyl-CoAs to the corresponding 2,4-dienoyl-CoAs. Involved in degradation of unsaturated fatty acids. The protein is Delta(3,5)-Delta(2,4)-dienoyl-CoA isomerase, peroxisomal of Arabidopsis thaliana (Mouse-ear cress).